A 414-amino-acid chain; its full sequence is Gamma-glutamyl phosphate reductase (414 aa).

This sequence belongs to the gamma-glutamyl phosphate reductase family.

Its subcellular location is the cytoplasm. The enzyme catalyses L-glutamate 5-semialdehyde + phosphate + NADP(+) = L-glutamyl 5-phosphate + NADPH + H(+). It functions in the pathway amino-acid biosynthesis; L-proline biosynthesis; L-glutamate 5-semialdehyde from L-glutamate: step 2/2. Its function is as follows. Catalyzes the NADPH-dependent reduction of L-glutamate 5-phosphate into L-glutamate 5-semialdehyde and phosphate. The product spontaneously undergoes cyclization to form 1-pyrroline-5-carboxylate. The sequence is that of Gamma-glutamyl phosphate reductase from Kosmotoga olearia (strain ATCC BAA-1733 / DSM 21960 / TBF 19.5.1).